The following is a 445-amino-acid chain: DDB1- and CUL4-associated factor 13 (445 aa).

N6-acetyllysine is present on Lys-49. WD repeat units lie at residues 64–104 (GHRD…CIRT), 107–146 (AHEGFVRGICTRFCGTSFFTVGDDKTVKQWKMDGPGYGDE), 149–191 (PLHT…PICS), 194–234 (WGFD…PLKK), 236–276 (ILDM…TPVM), 280–319 (DHVSAVLDVDYSPTGKEFVSASFDKSIRIFPVDKSRSREV), and 323–362 (KRMQHVICVKWTSDSKYIMCGSDEMNIRLWKANASEKLGV). Residues 353-441 (KANASEKLGV…LVSEKKKHVV (89 aa)) form a required for nucleolar location region.

Belongs to the WD repeat DCAF13/WDSOF1 family. As to quaternary structure, part of the small subunit (SSU) processome, composed of more than 70 proteins and the RNA chaperone small nucleolar RNA (snoRNA) U3. Component of the DCX(DCAF13) E3 ubiquitin ligase complex, at least composed of CUL4 (CUL4A or CUL4B), DDB1, DCAF13 and RBX1. Interacts (via WD40 domain) with DDB1. Interacts with ESR1 and LATS1. Expressed in the endometrium during decidualization. Expression is down-regulated in preeclampsia decidual tissues.

The protein localises to the nucleus. It is found in the nucleolus. The protein operates within protein modification; protein ubiquitination. Its function is as follows. Part of the small subunit (SSU) processome, first precursor of the small eukaryotic ribosomal subunit. During the assembly of the SSU processome in the nucleolus, many ribosome biogenesis factors, an RNA chaperone and ribosomal proteins associate with the nascent pre-rRNA and work in concert to generate RNA folding, modifications, rearrangements and cleavage as well as targeted degradation of pre-ribosomal RNA by the RNA exosome. Participates in the 18S rRNA processing in growing oocytes, being essential for oocyte nonsurrounded nucleolus (NSN) to surrounded nucleolus (SN) transition. In terms of biological role, substrate-recognition component of a DCX (DDB1-CUL4-X-box) E3 ubiquitin-protein ligase complex that plays a key role in embryo preimplantation and is required for normal meiotic cycle progression in oocytes. Acts as a maternal factor that regulates oocyte and zygotic chromatin tightness during maternal to zygotic transition. Also involved in the transformation of the endometrium into the decidua, known as decidualization, providing a solid foundation for implantation of blastocysts. Recognizes the histone methyltransferases SUV39H1 and SUV39H2 and directs them to polyubiquitination and proteasomal degradation, which facilitates the H3K9me3 removal and early zygotic gene expression, essential steps for progressive genome reprogramming and the establishment of pluripotency during preimplantation embryonic development. Supports the spindle assembly and chromosome condensation during oocyte meiotic division by targeting the polyubiquitination and degradation of PTEN, a lipid phosphatase that inhibits PI3K pathway as well as oocyte growth and maturation. Targets PMP22 for polyubiquitination and proteasomal degradation. This chain is DDB1- and CUL4-associated factor 13, found in Homo sapiens (Human).